Reading from the N-terminus, the 287-residue chain is Anthocyanidin 3-O-glucosyltransferase 7 (287 aa).

UDP-alpha-D-glucose-binding residues include Ala-162, Gln-164, His-179, Trp-182, Asn-183, Ser-184, and Glu-187. Gly-202 provides a ligand contact to an anthocyanidin. Residues Asp-203 and Gln-204 each coordinate UDP-alpha-D-glucose.

It belongs to the UDP-glycosyltransferase family. In terms of tissue distribution, expressed in cotyledons, hypocotyls, roots and leaves.

It carries out the reaction an anthocyanidin + UDP-alpha-D-glucose + H(+) = an anthocyanidin 3-O-beta-D-glucoside + UDP. The protein operates within pigment biosynthesis; anthocyanin biosynthesis. In the presence of other necessary color factors, this glycosylation reaction allows the accumulation of anthocyanin pigments. The polypeptide is Anthocyanidin 3-O-glucosyltransferase 7 (GT7) (Manihot esculenta (Cassava)).